Consider the following 231-residue polypeptide: 2-C-methyl-D-erythritol 4-phosphate cytidylyltransferase (231 aa).

It belongs to the IspD/TarI cytidylyltransferase family. IspD subfamily.

It catalyses the reaction 2-C-methyl-D-erythritol 4-phosphate + CTP + H(+) = 4-CDP-2-C-methyl-D-erythritol + diphosphate. It functions in the pathway isoprenoid biosynthesis; isopentenyl diphosphate biosynthesis via DXP pathway; isopentenyl diphosphate from 1-deoxy-D-xylulose 5-phosphate: step 2/6. Functionally, catalyzes the formation of 4-diphosphocytidyl-2-C-methyl-D-erythritol from CTP and 2-C-methyl-D-erythritol 4-phosphate (MEP). This is 2-C-methyl-D-erythritol 4-phosphate cytidylyltransferase from Mycobacterium bovis (strain BCG / Pasteur 1173P2).